The sequence spans 357 residues: (+)-eremophilene synthase (357 aa).

The Mg(2+) site is built by D100 and E105. Residues 100–105 (DDDFDE) carry the DDXXE motif motif. R198 is a substrate binding site. 2 residues coordinate Mg(2+): N244 and S248. K251 serves as a coordination point for substrate. D252 provides a ligand contact to Mg(2+). A substrate-binding site is contributed by 331 to 332 (RY).

It belongs to the terpene synthase family. Mg(2+) serves as cofactor.

The enzyme catalyses (2E,6E)-farnesyl diphosphate = (+)-eremophilene + diphosphate. The protein operates within secondary metabolite biosynthesis; terpenoid biosynthesis. In terms of biological role, catalyzes the conversion of (2E,6E)-farnesyl diphosphate (FPP) to yield the bicyclic sesquiterpene eremophilene via a 1,10-cyclization, which requires the abstraction of the pyrophosphate from FPP to yield the (E,E)-germacradienyl cation. The only accepted substrate is farnesyl diphosphate (FPP). This Gibberella fujikuroi (strain CBS 195.34 / IMI 58289 / NRRL A-6831) (Bakanae and foot rot disease fungus) protein is (+)-eremophilene synthase.